A 78-amino-acid chain; its full sequence is Acyl carrier protein (78 aa).

The Carrier domain occupies 1-76 (MALFEDIQAV…DVVKYIEDNK (76 aa)). S36 bears the O-(pantetheine 4'-phosphoryl)serine mark.

This sequence belongs to the acyl carrier protein (ACP) family. Post-translationally, 4'-phosphopantetheine is transferred from CoA to a specific serine of apo-ACP by AcpS. This modification is essential for activity because fatty acids are bound in thioester linkage to the sulfhydryl of the prosthetic group.

The protein resides in the cytoplasm. It participates in lipid metabolism; fatty acid biosynthesis. Its function is as follows. Carrier of the growing fatty acid chain in fatty acid biosynthesis. The chain is Acyl carrier protein from Helicobacter pylori (strain ATCC 700392 / 26695) (Campylobacter pylori).